Here is a 429-residue protein sequence, read N- to C-terminus: Zygotic gap protein knirps (429 aa).

The nuclear receptor DNA-binding region spans 2-78 (NQTCKVCGEP…VGMSKGGSRY (77 aa)). NR C4-type zinc fingers lie at residues 5-25 (CKVCGEPAAGFHFGAFTCEGC) and 42-66 (CKNEGKCIIDKKNRTTCKACRLRKC). The segment covering 112–126 (SVGGAPSASSPVGSP) has biased composition (low complexity). 4 disordered regions span residues 112–148 (SVGGAPSASSPVGSPHTPGFGDMAAHLHHHHQQQQQQ), 223–250 (QSVDSVESQNRFSPASQPPVVQPTSSAR), 338–357 (TSRSSVHSFNDSGSEDQEVE), and 375–397 (SSSSSSHSAAHSPNTTTAHAEVK). 2 stretches are compositionally biased toward polar residues: residues 225-237 (VDSVESQNRFSPA) and 338-349 (TSRSSVHSFNDS). Residues 375–393 (SSSSSSHSAAHSPNTTTAH) are compositionally biased toward low complexity.

It belongs to the nuclear hormone receptor family. NR0 subfamily.

It is found in the nucleus. Transcriptional repressor. Binds to multiple sites in the eve stripe 3 enhancer element. Plays an essential role in the segmentation process both by refining the expression patterns of gap genes and by establishing pair-rules stripes of gene expression. The chain is Zygotic gap protein knirps (kni) from Drosophila melanogaster (Fruit fly).